The following is a 227-amino-acid chain: GTPase ERas (227 aa).

Residues Met-1–Thr-19 are compositionally biased toward polar residues. Positions Met-1–Ser-25 are disordered. A GTP-binding site is contributed by Gly-48–Ser-55. The Effector region motif lies at His-70–Tyr-78. GTP is bound by residues Asp-95 to Gln-99 and Asn-151 to Asp-154. Residues Cys-220 and Cys-222 are each lipidated (S-palmitoyl cysteine). At Cys-224 the chain carries Cysteine methyl ester. Cys-224 carries the S-farnesyl cysteine lipid modification. Positions Ser-225–Ala-227 are cleaved as a propeptide — removed in mature form.

This sequence belongs to the small GTPase superfamily. Ras family. In terms of assembly, interacts with PIK3CD. Expressed in several undifferentiated mouse embryonic stem cell lines.

It localises to the cell membrane. The enzyme catalyses GTP + H2O = GDP + phosphate + H(+). Its activity is regulated as follows. Alternates between an inactive form bound to GDP and an active form bound to GTP. Activated by a guanine nucleotide-exchange factor (GEF) and inactivated by a GTPase-activating protein (GAP). Its function is as follows. Ras proteins bind GDP/GTP and possess intrinsic GTPase activity. Plays an important role in the tumor-like growth properties of embryonic stem cells. This Mus musculus (Mouse) protein is GTPase ERas (Eras).